The primary structure comprises 716 residues: Probable basic-leucine zipper transcription factor O (716 aa).

A coiled-coil region spans residues 20–142 (LLDDFSQLQQ…YQQRQQQYQD (123 aa)). The segment at 173-233 (SINYNMNNNN…NNKTTDNINN (61 aa)) is disordered. Residues 381 to 444 (KSTESIKKMN…SVDLMKPSND (64 aa)) form the bZIP domain. Residues 387-403 (KKMNQNKASRNYRQKKK) form a basic motif region. The tract at residues 406–413 (IKEIEDKL) is leucine-zipper.

The protein belongs to the bZIP family.

Its subcellular location is the nucleus. Probable transcriptional regulator. The protein is Probable basic-leucine zipper transcription factor O (bzpO) of Dictyostelium discoideum (Social amoeba).